The sequence spans 145 residues: Large ribosomal subunit protein uL13 (145 aa).

It belongs to the universal ribosomal protein uL13 family. In terms of assembly, part of the 50S ribosomal subunit. Binds to Obg (AC P20964).

Functionally, this protein is one of the early assembly proteins of the 50S ribosomal subunit, although it is not seen to bind rRNA by itself. It is important during the early stages of 50S assembly. The chain is Large ribosomal subunit protein uL13 from Bacillus subtilis (strain 168).